Reading from the N-terminus, the 533-residue chain is (E)-beta-farnesene synthase (533 aa).

Asp286 and Asp290 together coordinate Mg(2+). Positions 286, 290, 427, and 430 each coordinate substrate. The short motif at 286 to 290 (DDMMD) is the DDXXD motif element. Asn430 and Glu438 together coordinate Mg(2+).

The protein belongs to the terpene synthase family. Monomer. Requires Mg(2+) as cofactor. The cofactor is Mn(2+).

The protein resides in the cytoplasm. The enzyme catalyses (2E,6E)-farnesyl diphosphate = (E)-beta-farnesene + diphosphate. It catalyses the reaction (2E,6E)-farnesyl diphosphate = alpha-copaene + diphosphate. The catalysed reaction is (2E,6E)-farnesyl diphosphate = (1S,5S,6R)-alpha-bergamotene + diphosphate. It carries out the reaction (2E,6E)-farnesyl diphosphate = (-)-(E)-beta-caryophyllene + diphosphate. The enzyme catalyses (2E,6E)-farnesyl diphosphate = delta-cadinene + diphosphate. It catalyses the reaction (2E,6E)-farnesyl diphosphate = (+)-germacrene D + diphosphate. The catalysed reaction is (2E,6E)-farnesyl diphosphate = alpha-zingiberene + diphosphate. It carries out the reaction (2E,6E)-farnesyl diphosphate = alpha-muurolene + diphosphate. The enzyme catalyses (2E,6E)-farnesyl diphosphate = (S)-beta-bisabolene + diphosphate. It catalyses the reaction (2E,6E)-farnesyl diphosphate = beta-sesquiphellandrene + diphosphate. The catalysed reaction is (2E,6E)-farnesyl diphosphate = sesquisabinene A + diphosphate. It functions in the pathway secondary metabolite biosynthesis; terpenoid biosynthesis. Its function is as follows. Sesquiterpene cyclase catalyzing mainly the production of beta-farnesene and alpha-bergamotene in equal amounts from farnesyl diphosphate. Also mediates the biosynthesis of minor sesquiterpene hydrocarbons including alpha-muurolene, beta-bisabolene, zingiberene, sesquiphellandrene, sesquisabinene A, germacrene D, delta-cadinene, alpha-copaene and (E)-beta-caryophyllene. Involved in indirect defense by producing volatile signals attracting natural enemies of herbivores. The sequence is that of (E)-beta-farnesene synthase from Zea mays (Maize).